Reading from the N-terminus, the 404-residue chain is Tyrosine--tRNA ligase (404 aa).

A 'HIGH' region motif is present at residues 45–54; it reads PTAPDLHLGH. The 'KMSKS' region motif lies at 229-233; that stretch reads KMSKS. An ATP-binding site is contributed by K232. The S4 RNA-binding domain maps to 342–402; it reads IFIASIVRLA…GKKAIAQVTF (61 aa).

The protein belongs to the class-I aminoacyl-tRNA synthetase family. TyrS type 2 subfamily. Homodimer.

The protein resides in the cytoplasm. It carries out the reaction tRNA(Tyr) + L-tyrosine + ATP = L-tyrosyl-tRNA(Tyr) + AMP + diphosphate + H(+). Catalyzes the attachment of tyrosine to tRNA(Tyr) in a two-step reaction: tyrosine is first activated by ATP to form Tyr-AMP and then transferred to the acceptor end of tRNA(Tyr). This Acinetobacter baylyi (strain ATCC 33305 / BD413 / ADP1) protein is Tyrosine--tRNA ligase.